A 405-amino-acid chain; its full sequence is MKIIAKIPAWMLLCLFILSPTTETIYTSGLPSLTKYFGIDGGITQTTSTLYFLGFALGILTLGRLSDIYGRRPIALLGLFIYVISSIISIFAVNIEMLMIARFVQAFGVSVGSVIGQAMARDSYQGSELSYVYASLSPWLLFIPSLGSSIGGYIIEYSSWHYVFVFFSLTGTILLALYYKVLPETNSYIDFSQSSKYFEVLQVIIKDKILWLYAFIIGAFNGIYYGFFIEAPFIFIDKMKVSSSFYGKLAFLLSFAAIFGGFLGGYLIKKRHVHDKKVMGLGFIFSLCGCILFAVNAFILEVVSASHSLAIAMIFVPMMIHMVGHNLLIPMTLRYALVDYAKVTGTAGSIFGAIYYVVIAAVTYLVSKIHSETISNFALLCFVLSISSAISFYCIWVLYKKKHKL.

Transmembrane regions (helical) follow at residues 3–23 (IIAK…PTTE), 42–62 (GITQ…ILTL), 73–93 (PIAL…IFAV), 95–115 (IEML…GSVI), 135–155 (SLSP…GYII), 162–182 (YVFV…YKVL), 209–229 (ILWL…GFFI), 248–268 (KLAF…GYLI), 280–300 (GLGF…AFIL), 309–329 (LAIA…NLLI), 346–366 (TAGS…TYLV), and 377–397 (FALL…CIWV).

This sequence belongs to the major facilitator superfamily. Bcr/CmlA family.

It is found in the cell inner membrane. This is an uncharacterized protein from Rickettsia felis (strain ATCC VR-1525 / URRWXCal2) (Rickettsia azadi).